A 400-amino-acid chain; its full sequence is Argininosuccinate synthase (400 aa).

Residue 10–18 (AYSGGVDTS) participates in ATP binding. L-citrulline is bound at residue tyrosine 89. Residue glycine 119 participates in ATP binding. L-aspartate is bound by residues threonine 121, asparagine 125, and aspartate 126. L-citrulline is bound at residue asparagine 125. L-citrulline is bound by residues arginine 129, serine 177, serine 186, glutamate 262, and tyrosine 274.

Belongs to the argininosuccinate synthase family. Type 1 subfamily. Homotetramer.

Its subcellular location is the cytoplasm. The enzyme catalyses L-citrulline + L-aspartate + ATP = 2-(N(omega)-L-arginino)succinate + AMP + diphosphate + H(+). It functions in the pathway amino-acid biosynthesis; L-arginine biosynthesis; L-arginine from L-ornithine and carbamoyl phosphate: step 2/3. The sequence is that of Argininosuccinate synthase from Synechococcus sp. (strain JA-2-3B'a(2-13)) (Cyanobacteria bacterium Yellowstone B-Prime).